A 482-amino-acid polypeptide reads, in one-letter code: Altronate oxidoreductase (482 aa).

Isoleucine 18–alanine 29 contributes to the NAD(+) binding site.

This sequence belongs to the mannitol dehydrogenase family. UxaB subfamily.

It catalyses the reaction D-altronate + NAD(+) = keto-D-tagaturonate + NADH + H(+). It functions in the pathway carbohydrate metabolism; pentose and glucuronate interconversion. The chain is Altronate oxidoreductase from Shigella sonnei (strain Ss046).